Reading from the N-terminus, the 295-residue chain is Bifunctional protein FolD (295 aa).

NADP(+) contacts are provided by residues 166 to 168 (GRS), serine 191, and isoleucine 232.

Belongs to the tetrahydrofolate dehydrogenase/cyclohydrolase family. Homodimer.

The catalysed reaction is (6R)-5,10-methylene-5,6,7,8-tetrahydrofolate + NADP(+) = (6R)-5,10-methenyltetrahydrofolate + NADPH. It catalyses the reaction (6R)-5,10-methenyltetrahydrofolate + H2O = (6R)-10-formyltetrahydrofolate + H(+). The protein operates within one-carbon metabolism; tetrahydrofolate interconversion. Functionally, catalyzes the oxidation of 5,10-methylenetetrahydrofolate to 5,10-methenyltetrahydrofolate and then the hydrolysis of 5,10-methenyltetrahydrofolate to 10-formyltetrahydrofolate. This Wolbachia sp. subsp. Brugia malayi (strain TRS) protein is Bifunctional protein FolD.